We begin with the raw amino-acid sequence, 282 residues long: S-formylglutathione hydrolase (282 aa).

N-acetylalanine is present on Ala2. N6-succinyllysine is present on Lys4. Residues Ser149, Asp226, and His260 each act as charge relay system in the active site.

The protein belongs to the esterase D family. Homodimer.

The protein localises to the cytoplasm. It localises to the cytoplasmic vesicle. It catalyses the reaction S-formylglutathione + H2O = formate + glutathione + H(+). Functionally, serine hydrolase involved in the detoxification of formaldehyde. The protein is S-formylglutathione hydrolase (ESD) of Bos taurus (Bovine).